A 424-amino-acid chain; its full sequence is Multifunctional CCA protein (424 aa).

Residues Gly-8 and Arg-11 each contribute to the ATP site. CTP is bound by residues Gly-8 and Arg-11. Mg(2+) is bound by residues Asp-21 and Asp-23. Residues Arg-91, Arg-149, and Arg-152 each coordinate ATP. Arg-91, Arg-149, and Arg-152 together coordinate CTP. The region spanning 238–339 (TGIHLMMVLD…VRLLERCDAF (102 aa)) is the HD domain.

This sequence belongs to the tRNA nucleotidyltransferase/poly(A) polymerase family. Bacterial CCA-adding enzyme type 1 subfamily. As to quaternary structure, monomer. Can also form homodimers and oligomers. Requires Mg(2+) as cofactor. The cofactor is Ni(2+).

It carries out the reaction a tRNA precursor + 2 CTP + ATP = a tRNA with a 3' CCA end + 3 diphosphate. It catalyses the reaction a tRNA with a 3' CCA end + 2 CTP + ATP = a tRNA with a 3' CCACCA end + 3 diphosphate. Catalyzes the addition and repair of the essential 3'-terminal CCA sequence in tRNAs without using a nucleic acid template. Adds these three nucleotides in the order of C, C, and A to the tRNA nucleotide-73, using CTP and ATP as substrates and producing inorganic pyrophosphate. tRNA 3'-terminal CCA addition is required both for tRNA processing and repair. Also involved in tRNA surveillance by mediating tandem CCA addition to generate a CCACCA at the 3' terminus of unstable tRNAs. While stable tRNAs receive only 3'-terminal CCA, unstable tRNAs are marked with CCACCA and rapidly degraded. In Polaromonas naphthalenivorans (strain CJ2), this protein is Multifunctional CCA protein.